The chain runs to 111 residues: MFKATARYIRVQPRKARLAAGLMRNRSVVEAQQQLSFSQMKAGRCLKKVLDSAIANAESNENIKRENLCVLEVRVDAGPMFKRMKSKSRGGRAPILKRTSHLTVIVGERGQ.

This sequence belongs to the universal ribosomal protein uL22 family. Part of the 50S ribosomal subunit.

In terms of biological role, this protein binds specifically to 23S rRNA; its binding is stimulated by other ribosomal proteins, e.g. L4, L17, and L20. It is important during the early stages of 50S assembly. It makes multiple contacts with different domains of the 23S rRNA in the assembled 50S subunit and ribosome. Its function is as follows. The globular domain of the protein is located near the polypeptide exit tunnel on the outside of the subunit, while an extended beta-hairpin is found that lines the wall of the exit tunnel in the center of the 70S ribosome. In Chlamydia trachomatis serovar L2 (strain ATCC VR-902B / DSM 19102 / 434/Bu), this protein is Large ribosomal subunit protein uL22.